A 317-amino-acid polypeptide reads, in one-letter code: uncharacterized protein (317 aa).

Over residues 68 to 78 (DSTNTDISNET) the composition is skewed to low complexity. The segment at 68 to 87 (DSTNTDISNETPILSNNTPI) is disordered.

This is an uncharacterized protein from Methanocaldococcus jannaschii (strain ATCC 43067 / DSM 2661 / JAL-1 / JCM 10045 / NBRC 100440) (Methanococcus jannaschii).